We begin with the raw amino-acid sequence, 451 residues long: Tubulin gamma-2 chain (451 aa).

Phosphoserine; by BRSK1 is present on S131. 142-148 (AGGTGSG) contributes to the GTP binding site.

It belongs to the tubulin family. Component of the gamma-tubulin ring complex (gTuRC) consisting of TUBGCP2, TUBGCP3, TUBGCP4, TUBGCP5 and TUBGCP6 and gamma-tubulin TUBG1 or TUBG2. TUBGCP2, TUBGCP3, TUBGCP4, TUBGCP5 and TUBGCP6 assemble in a 5:5:2:1:1 stoichiometry; each is associated with a gamma-tubulin, thereby arranging 14 gamma-tubulins in a helical manner. Gamma-tubulin at the first position is blocked by TUBGCP3 at the last position, allowing 13 protafilaments to grow into a microtubule. Interacts with alpha-beta tubulin heterodimers; the interaction allows microtubules to nucleate from the gTuRC. Phosphorylation at Ser-131 by BRSK1 regulates centrosome duplication, possibly by mediating relocation of gamma-tubulin and its associated proteins from the cytoplasm to the centrosome.

The protein resides in the cytoplasm. It localises to the cytoskeleton. Its subcellular location is the microtubule organizing center. The protein localises to the centrosome. Tubulin is the major constituent of microtubules, protein filaments consisting of alpha- and beta-tubulin heterodimers. Gamma-tubulin is a key component of the gamma-tubulin ring complex (gTuRC) which mediates microtubule nucleation. The gTuRC regulates the minus-end nucleation of alpha-beta tubulin heterodimers that grow into microtubule protafilaments, a critical step in centrosome duplication and spindle formation. This chain is Tubulin gamma-2 chain (TUBG2), found in Homo sapiens (Human).